The following is a 272-amino-acid chain: Octanoyltransferase (272 aa).

The segment covering 1–12 has biased composition (polar residues); that stretch reads MQQDPPTSQPHT. The disordered stretch occupies residues 1 to 20; sequence MQQDPPTSQPHTPQIVDGVK. The 191-residue stretch at 65–255 folds into the BPL/LPL catalytic domain; sequence HQRPNTVIYV…EMMSFQPYEM (191 aa). Residues 103-110, 175-177, and 188-190 each bind substrate; these read RGGEITWH, AIG, and GFA. C206 serves as the catalytic Acyl-thioester intermediate.

This sequence belongs to the LipB family.

The protein localises to the cytoplasm. It carries out the reaction octanoyl-[ACP] + L-lysyl-[protein] = N(6)-octanoyl-L-lysyl-[protein] + holo-[ACP] + H(+). It participates in protein modification; protein lipoylation via endogenous pathway; protein N(6)-(lipoyl)lysine from octanoyl-[acyl-carrier-protein]: step 1/2. Functionally, catalyzes the transfer of endogenously produced octanoic acid from octanoyl-acyl-carrier-protein onto the lipoyl domains of lipoate-dependent enzymes. Lipoyl-ACP can also act as a substrate although octanoyl-ACP is likely to be the physiological substrate. This Cutibacterium acnes (strain DSM 16379 / KPA171202) (Propionibacterium acnes) protein is Octanoyltransferase.